A 333-amino-acid polypeptide reads, in one-letter code: Holliday junction branch migration complex subunit RuvB (333 aa).

The segment at Met1–Tyr181 is large ATPase domain (RuvB-L). ATP contacts are provided by residues Leu20, Arg21, Gly62, Lys65, Thr66, Thr67, Glu128–Phe130, Arg171, Tyr181, and Arg218. A Mg(2+)-binding site is contributed by Thr66. Residues Gln182–Asp252 are small ATPAse domain (RuvB-S). Positions Ala255–Asp333 are head domain (RuvB-H). Residues Arg291, Arg310, and Arg315 each contribute to the DNA site.

This sequence belongs to the RuvB family. As to quaternary structure, homohexamer. Forms an RuvA(8)-RuvB(12)-Holliday junction (HJ) complex. HJ DNA is sandwiched between 2 RuvA tetramers; dsDNA enters through RuvA and exits via RuvB. An RuvB hexamer assembles on each DNA strand where it exits the tetramer. Each RuvB hexamer is contacted by two RuvA subunits (via domain III) on 2 adjacent RuvB subunits; this complex drives branch migration. In the full resolvosome a probable DNA-RuvA(4)-RuvB(12)-RuvC(2) complex forms which resolves the HJ.

The protein resides in the cytoplasm. The catalysed reaction is ATP + H2O = ADP + phosphate + H(+). Its function is as follows. The RuvA-RuvB-RuvC complex processes Holliday junction (HJ) DNA during genetic recombination and DNA repair, while the RuvA-RuvB complex plays an important role in the rescue of blocked DNA replication forks via replication fork reversal (RFR). RuvA specifically binds to HJ cruciform DNA, conferring on it an open structure. The RuvB hexamer acts as an ATP-dependent pump, pulling dsDNA into and through the RuvAB complex. RuvB forms 2 homohexamers on either side of HJ DNA bound by 1 or 2 RuvA tetramers; 4 subunits per hexamer contact DNA at a time. Coordinated motions by a converter formed by DNA-disengaged RuvB subunits stimulates ATP hydrolysis and nucleotide exchange. Immobilization of the converter enables RuvB to convert the ATP-contained energy into a lever motion, pulling 2 nucleotides of DNA out of the RuvA tetramer per ATP hydrolyzed, thus driving DNA branch migration. The RuvB motors rotate together with the DNA substrate, which together with the progressing nucleotide cycle form the mechanistic basis for DNA recombination by continuous HJ branch migration. Branch migration allows RuvC to scan DNA until it finds its consensus sequence, where it cleaves and resolves cruciform DNA. The polypeptide is Holliday junction branch migration complex subunit RuvB (Lactococcus lactis subsp. lactis (strain IL1403) (Streptococcus lactis)).